The sequence spans 364 residues: Threonine-phosphate decarboxylase (364 aa).

O-phospho-L-threonine is bound by residues 8-9 (HG), N32, and N157. Position 216 is an N6-(pyridoxal phosphate)lysine (K216). O-phospho-L-threonine-binding residues include R323 and R337.

It belongs to the class-II pyridoxal-phosphate-dependent aminotransferase family. Homodimer. Pyridoxal 5'-phosphate serves as cofactor.

The enzyme catalyses O-phospho-L-threonine + H(+) = (R)-1-aminopropan-2-yl phosphate + CO2. The protein operates within cofactor biosynthesis; adenosylcobalamin biosynthesis. Its function is as follows. Decarboxylates L-threonine-O-3-phosphate to yield (R)-1-amino-2-propanol O-2-phosphate, the precursor for the linkage between the nucleotide loop and the corrin ring in cobalamin. The polypeptide is Threonine-phosphate decarboxylase (cobD) (Salmonella typhimurium (strain LT2 / SGSC1412 / ATCC 700720)).